We begin with the raw amino-acid sequence, 388 residues long: Succinyl-diaminopimelate desuccinylase (388 aa).

Position 72 (His72) interacts with Zn(2+). The active site involves Asp74. Asp105 contacts Zn(2+). Glu139 functions as the Proton acceptor in the catalytic mechanism. Glu140, Glu168, and His353 together coordinate Zn(2+).

It belongs to the peptidase M20A family. DapE subfamily. As to quaternary structure, homodimer. The cofactor is Zn(2+). Co(2+) serves as cofactor.

It catalyses the reaction N-succinyl-(2S,6S)-2,6-diaminopimelate + H2O = (2S,6S)-2,6-diaminopimelate + succinate. It functions in the pathway amino-acid biosynthesis; L-lysine biosynthesis via DAP pathway; LL-2,6-diaminopimelate from (S)-tetrahydrodipicolinate (succinylase route): step 3/3. Functionally, catalyzes the hydrolysis of N-succinyl-L,L-diaminopimelic acid (SDAP), forming succinate and LL-2,6-diaminopimelate (DAP), an intermediate involved in the bacterial biosynthesis of lysine and meso-diaminopimelic acid, an essential component of bacterial cell walls. The protein is Succinyl-diaminopimelate desuccinylase of Orientia tsutsugamushi (strain Boryong) (Rickettsia tsutsugamushi).